We begin with the raw amino-acid sequence, 201 residues long: Auxin-binding protein 1 (201 aa).

The signal sequence occupies residues 1–38; sequence MAPDLSELAAAAAARGAYLAGVGVAVLLAASFLPVAES. A disulfide bond links C40 and C193. H95, H97, and E101 together coordinate Zn(2+). N133 carries an N-linked (GlcNAc...) asparagine glycan. Position 144 (H144) interacts with Zn(2+). A Prevents secretion from ER motif is present at residues 198–201; it reads KDEL.

As to quaternary structure, homodimer. Glycosylated. As to expression, expressed in roots, coleoptiles, leaves, stems, tassels and ears.

The protein localises to the endoplasmic reticulum lumen. Functionally, receptor for the plant hormone auxin. This chain is Auxin-binding protein 1, found in Zea mays (Maize).